The chain runs to 125 residues: Interferon-induced transmembrane protein 1 (125 aa).

Residues Met-1–His-36 are Cytoplasmic-facing. Ser-16 carries the phosphoserine modification. The helical intramembrane region spans Val-37–Phe-57. 3 S-palmitoyl cysteine lipidation sites follow: Cys-50, Cys-51, and Cys-84. The Cytoplasmic segment spans residues Ala-58–Asn-86. Residues Cys-84–Tyr-125 are interaction with CAV1. Residues Ile-87–Gly-107 traverse the membrane as a helical segment. The Extracellular portion of the chain corresponds to Ser-108–Tyr-125.

The protein belongs to the CD225/Dispanin family. As to quaternary structure, interacts with CD81. Part of a complex composed of CD19, CR2/CD21, CD81 and IFITM1/CD225 in the membrane of mature B-cells. Interacts with CAV1; this interaction enhances the ability of CAV1 in inhibiting ERK activation. In terms of processing, palmitoylation on membrane-proximal cysteines controls clustering in membrane compartments and antiviral activity. As to expression, bone (at protein level). Levels greatly elevated in colon cancer, cervical cancer, esophageal cancer and ovarian cancer. Expressed in glioma cell lines.

Its subcellular location is the cell membrane. It localises to the lysosome membrane. Functionally, IFN-induced antiviral protein which inhibits the entry of viruses to the host cell cytoplasm, permitting endocytosis, but preventing subsequent viral fusion and release of viral contents into the cytosol. Active against multiple viruses, including influenza A virus, SARS coronaviruses (SARS-CoV and SARS-CoV-2), Marburg virus (MARV), Ebola virus (EBOV), Dengue virus (DNV), West Nile virus (WNV), human immunodeficiency virus type 1 (HIV-1) and hepatitis C virus (HCV). Can inhibit: influenza virus hemagglutinin protein-mediated viral entry, MARV and EBOV GP1,2-mediated viral entry and SARS-CoV and SARS-CoV-2 S protein-mediated viral entry. Also implicated in cell adhesion and control of cell growth and migration. Inhibits SARS-CoV-2 S protein-mediated syncytia formation. Plays a key role in the antiproliferative action of IFN-gamma either by inhibiting the ERK activation or by arresting cell growth in G1 phase in a p53-dependent manner. Acts as a positive regulator of osteoblast differentiation. In hepatocytes, IFITM proteins act in a coordinated manner to restrict HCV infection by targeting the endocytosed HCV virion for lysosomal degradation. IFITM2 and IFITM3 display anti-HCV activity that may complement the anti-HCV activity of IFITM1 by inhibiting the late stages of HCV entry, possibly in a coordinated manner by trapping the virion in the endosomal pathway and targeting it for degradation at the lysosome. This Homo sapiens (Human) protein is Interferon-induced transmembrane protein 1.